We begin with the raw amino-acid sequence, 291 residues long: Taste receptor type 2 member 16 (291 aa).

A topological domain (extracellular) is located at residue methionine 1. A helical membrane pass occupies residues 2–22 (IPIQLTVFFMIIYVLESLTII). Residues 23–41 (VQSSLIVAVLGREWLQVRR) are Cytoplasmic-facing. Residues 42 to 62 (LMPVDMILISLGISRFCLQWA) form a helical membrane-spanning segment. Residues 63–84 (SMLNNFCSYFNLNYVLCNLTIT) are Extracellular-facing. Residue asparagine 80 is glycosylated (N-linked (GlcNAc...) asparagine). The chain crosses the membrane as a helical span at residues 85–105 (WEFFNILTFWLNSLLTVFYCI). Over 106 to 125 (KASSFTHHIFLWLRWRILRL) the chain is Cytoplasmic. The helical transmembrane segment at 126–146 (FPWILLGSLMITCVTIIPSAI) threads the bilayer. Over 147 to 182 (GNYIQIQLLTMEHLPRNSTVTDKLEKFHQYQFQAHT) the chain is Extracellular. Asparagine 163 is a glycosylation site (N-linked (GlcNAc...) asparagine). The chain crosses the membrane as a helical span at residues 183 to 203 (VALVIPFILFLASTILLMASL). Over 204–228 (TKQIQHHSTGHCNPSMKAHFTALRS) the chain is Cytoplasmic. Residues 229 to 249 (LAVLFIVFTSYFLTILITIIG) traverse the membrane as a helical segment. Residues 250–257 (TLFDKRCW) lie on the Extracellular side of the membrane. Residues 258 to 278 (LWVWEAFVYAFILMHSTSLML) form a helical membrane-spanning segment. At 279 to 291 (SSPTLKRILKGKC) the chain is on the cytoplasmic side.

The protein belongs to the G-protein coupled receptor T2R family. In terms of assembly, interacts with RTP3 and RTP4.

The protein localises to the cell membrane. In terms of biological role, receptor that may play a role in the perception of bitterness and is gustducin-linked. May play a role in sensing the chemical composition of the gastrointestinal content. The activity of this receptor may stimulate alpha gustducin, mediate PLC-beta-2 activation and lead to the gating of TRPM5. The sequence is that of Taste receptor type 2 member 16 (TAS2R16) from Pan paniscus (Pygmy chimpanzee).